The primary structure comprises 172 residues: Large ribosomal subunit protein uL10 (172 aa).

This sequence belongs to the universal ribosomal protein uL10 family. As to quaternary structure, part of the ribosomal stalk of the 50S ribosomal subunit. The N-terminus interacts with L11 and the large rRNA to form the base of the stalk. The C-terminus forms an elongated spine to which L12 dimers bind in a sequential fashion forming a multimeric L10(L12)X complex.

In terms of biological role, forms part of the ribosomal stalk, playing a central role in the interaction of the ribosome with GTP-bound translation factors. This Nitrobacter winogradskyi (strain ATCC 25391 / DSM 10237 / CIP 104748 / NCIMB 11846 / Nb-255) protein is Large ribosomal subunit protein uL10.